A 57-amino-acid chain; its full sequence is COP9 signalosome complex subunit 9 (57 aa).

Threonine 26 is modified (phosphothreonine).

Belongs to the CSN9 family. As to quaternary structure, component of the CSN complex, composed of COPS1/GPS1, COPS2, COPS3, COPS4, COPS5, COPS6, COPS7 (COPS7A or COPS7B), COPS8 and COPS9. In the complex, it interacts directly with COPS3, COPS5 and COPS6.

It localises to the nucleus. The protein resides in the cytoplasm. The protein localises to the nucleoplasm. Its function is as follows. Component of the COP9 signalosome complex (CSN), a complex involved in various cellular and developmental processes. The CSN complex is an essential regulator of the ubiquitin (Ubl) conjugation pathway by mediating the deneddylation of the cullin subunits of SCF-type E3 ligase complexes, leading to decrease the Ubl ligase activity of SCF-type complexes such as SCF, CSA or DDB2. The complex is also involved in phosphorylation of p53/TP53, c-jun/JUN, IkappaBalpha/NFKBIA, ITPK1 and IRF8/ICSBP, possibly via its association with CK2 and PKD kinases. CSN-dependent phosphorylation of TP53 and JUN promotes and protects degradation by the Ubl system, respectively. Plays a role in cell proliferation. This chain is COP9 signalosome complex subunit 9, found in Bos taurus (Bovine).